The sequence spans 133 residues: Transcription antitermination protein NusB (133 aa).

It belongs to the NusB family.

Functionally, involved in transcription antitermination. Required for transcription of ribosomal RNA (rRNA) genes. Binds specifically to the boxA antiterminator sequence of the ribosomal RNA (rrn) operons. This chain is Transcription antitermination protein NusB, found in Shouchella clausii (strain KSM-K16) (Alkalihalobacillus clausii).